A 407-amino-acid chain; its full sequence is Na(+)-translocating NADH-quinone reductase subunit F (407 aa).

A helical membrane pass occupies residues 3–23 (IILGVAMFTGIVMVLVLLILF). The 2Fe-2S ferredoxin-type domain occupies 32–126 (GDIAVEVNGD…NLKIELPEEI (95 aa)). 4 residues coordinate [2Fe-2S] cluster: Cys-69, Cys-75, Cys-78, and Cys-110. Residues 129 to 269 (VKKWECEVIS…SGPFGEFFAK (141 aa)) form the FAD-binding FR-type domain.

The protein belongs to the NqrF family. As to quaternary structure, composed of six subunits; NqrA, NqrB, NqrC, NqrD, NqrE and NqrF. [2Fe-2S] cluster serves as cofactor. It depends on FAD as a cofactor.

It localises to the cell inner membrane. It catalyses the reaction a ubiquinone + n Na(+)(in) + NADH + H(+) = a ubiquinol + n Na(+)(out) + NAD(+). In terms of biological role, NQR complex catalyzes the reduction of ubiquinone-1 to ubiquinol by two successive reactions, coupled with the transport of Na(+) ions from the cytoplasm to the periplasm. The first step is catalyzed by NqrF, which accepts electrons from NADH and reduces ubiquinone-1 to ubisemiquinone by a one-electron transfer pathway. The polypeptide is Na(+)-translocating NADH-quinone reductase subunit F (Serratia proteamaculans (strain 568)).